Here is a 491-residue protein sequence, read N- to C-terminus: Ribulose-1,5 bisphosphate carboxylase/oxygenase large subunit N-methyltransferase, chloroplastic (491 aa).

In terms of domain architecture, SET spans 67-291 (EGVVTTKTPV…AGDQLFIQYD (225 aa)).

It belongs to the class V-like SAM-binding methyltransferase superfamily. Plant protein-lysine LSMT methyltransferase family.

Its subcellular location is the plastid. It is found in the chloroplast. It catalyses the reaction L-lysyl-[ribulose-1,5-bisphosphate carboxylase] + 3 S-adenosyl-L-methionine = N(6),N(6),N(6)-trimethyl-L-lysyl-[ribulose-1,5-bisphosphate carboxylase] + 3 S-adenosyl-L-homocysteine + 3 H(+). In terms of biological role, methylates 'Lys-14' of the large subunit of RuBisCO. This chain is Ribulose-1,5 bisphosphate carboxylase/oxygenase large subunit N-methyltransferase, chloroplastic (RBCMT), found in Nicotiana tabacum (Common tobacco).